Consider the following 54-residue polypeptide: ATP synthase F(0) complex subunit 8 (54 aa).

The chain crosses the membrane as a helical span at residues L4 to I24. The tract at residues N35–W54 is disordered. The segment covering A42–W54 has biased composition (basic and acidic residues).

This sequence belongs to the ATPase protein 8 family. Component of the ATP synthase complex composed at least of ATP5F1A/subunit alpha, ATP5F1B/subunit beta, ATP5MC1/subunit c (homooctomer), MT-ATP6/subunit a, MT-ATP8/subunit 8, ATP5ME/subunit e, ATP5MF/subunit f, ATP5MG/subunit g, ATP5MK/subunit k, ATP5MJ/subunit j, ATP5F1C/subunit gamma, ATP5F1D/subunit delta, ATP5F1E/subunit epsilon, ATP5PF/subunit F6, ATP5PB/subunit b, ATP5PD/subunit d, ATP5PO/subunit OSCP. ATP synthase complex consists of a soluble F(1) head domain (subunits alpha(3) and beta(3)) - the catalytic core - and a membrane F(0) domain - the membrane proton channel (subunits c, a, 8, e, f, g, k and j). These two domains are linked by a central stalk (subunits gamma, delta, and epsilon) rotating inside the F1 region and a stationary peripheral stalk (subunits F6, b, d, and OSCP).

Its subcellular location is the mitochondrion membrane. Subunit 8, of the mitochondrial membrane ATP synthase complex (F(1)F(0) ATP synthase or Complex V) that produces ATP from ADP in the presence of a proton gradient across the membrane which is generated by electron transport complexes of the respiratory chain. ATP synthase complex consist of a soluble F(1) head domain - the catalytic core - and a membrane F(1) domain - the membrane proton channel. These two domains are linked by a central stalk rotating inside the F(1) region and a stationary peripheral stalk. During catalysis, ATP synthesis in the catalytic domain of F(1) is coupled via a rotary mechanism of the central stalk subunits to proton translocation. In vivo, can only synthesize ATP although its ATP hydrolase activity can be activated artificially in vitro. Part of the complex F(0) domain. The chain is ATP synthase F(0) complex subunit 8 from Cyprinus carpio (Common carp).